Consider the following 457-residue polypeptide: Cysteine--tRNA ligase (457 aa).

Cysteine 28 serves as a coordination point for Zn(2+). The 'HIGH' region signature appears at methionine 30–histidine 40. Zn(2+) is bound by residues cysteine 209, histidine 234, and glutamate 238. A 'KMSKS' region motif is present at residues lysine 266–serine 270. Lysine 269 contributes to the ATP binding site.

It belongs to the class-I aminoacyl-tRNA synthetase family. Monomer. The cofactor is Zn(2+).

Its subcellular location is the cytoplasm. The catalysed reaction is tRNA(Cys) + L-cysteine + ATP = L-cysteinyl-tRNA(Cys) + AMP + diphosphate. In Laribacter hongkongensis (strain HLHK9), this protein is Cysteine--tRNA ligase.